The primary structure comprises 320 residues: tRNA dimethylallyltransferase (320 aa).

Residue 17–24 (GPTASGKT) participates in ATP binding. Substrate is bound at residue 19-24 (TASGKT). 3 interaction with substrate tRNA regions span residues 42–45 (DSAL), 166–170 (QRIQR), and 249–254 (RCVGYR).

This sequence belongs to the IPP transferase family. As to quaternary structure, monomer. It depends on Mg(2+) as a cofactor.

It carries out the reaction adenosine(37) in tRNA + dimethylallyl diphosphate = N(6)-dimethylallyladenosine(37) in tRNA + diphosphate. In terms of biological role, catalyzes the transfer of a dimethylallyl group onto the adenine at position 37 in tRNAs that read codons beginning with uridine, leading to the formation of N6-(dimethylallyl)adenosine (i(6)A). The sequence is that of tRNA dimethylallyltransferase from Herminiimonas arsenicoxydans.